Reading from the N-terminus, the 171-residue chain is AAF/I fimbrial subunit (171 aa).

An N-terminal signal peptide occupies residues M1–A28.

The protein resides in the fimbrium. This is AAF/I fimbrial subunit (aggA) from Escherichia coli.